A 290-amino-acid polypeptide reads, in one-letter code: Glycine--tRNA ligase alpha subunit (290 aa).

Belongs to the class-II aminoacyl-tRNA synthetase family. Tetramer of two alpha and two beta subunits.

The protein resides in the cytoplasm. It carries out the reaction tRNA(Gly) + glycine + ATP = glycyl-tRNA(Gly) + AMP + diphosphate. The chain is Glycine--tRNA ligase alpha subunit from Nitratiruptor sp. (strain SB155-2).